Reading from the N-terminus, the 242-residue chain is Probable transcriptional regulatory protein Bcen2424_2294 (242 aa).

The protein belongs to the TACO1 family.

The protein resides in the cytoplasm. This Burkholderia cenocepacia (strain HI2424) protein is Probable transcriptional regulatory protein Bcen2424_2294.